The primary structure comprises 138 residues: Large ribosomal subunit protein uL16 (138 aa).

Over residues 1 to 16 (MLIPRRVKHRKQHHPG) the composition is skewed to basic residues. The segment at 1 to 24 (MLIPRRVKHRKQHHPGRSGAATGG) is disordered.

Belongs to the universal ribosomal protein uL16 family. As to quaternary structure, part of the 50S ribosomal subunit.

Binds 23S rRNA and is also seen to make contacts with the A and possibly P site tRNAs. In Arthrobacter sp. (strain FB24), this protein is Large ribosomal subunit protein uL16.